The chain runs to 563 residues: Dihydroxy-acid dehydratase (563 aa).

Cysteine 50 lines the [2Fe-2S] cluster pocket. A Mg(2+)-binding site is contributed by aspartate 82. Cysteine 123 contributes to the [2Fe-2S] cluster binding site. 2 residues coordinate Mg(2+): aspartate 124 and lysine 125. The residue at position 125 (lysine 125) is an N6-carboxylysine. Cysteine 195 contributes to the [2Fe-2S] cluster binding site. Glutamate 447 lines the Mg(2+) pocket. Serine 473 functions as the Proton acceptor in the catalytic mechanism.

This sequence belongs to the IlvD/Edd family. In terms of assembly, homodimer. The cofactor is [2Fe-2S] cluster. Mg(2+) serves as cofactor.

The enzyme catalyses (2R)-2,3-dihydroxy-3-methylbutanoate = 3-methyl-2-oxobutanoate + H2O. It carries out the reaction (2R,3R)-2,3-dihydroxy-3-methylpentanoate = (S)-3-methyl-2-oxopentanoate + H2O. The protein operates within amino-acid biosynthesis; L-isoleucine biosynthesis; L-isoleucine from 2-oxobutanoate: step 3/4. Its pathway is amino-acid biosynthesis; L-valine biosynthesis; L-valine from pyruvate: step 3/4. Its function is as follows. Functions in the biosynthesis of branched-chain amino acids. Catalyzes the dehydration of (2R,3R)-2,3-dihydroxy-3-methylpentanoate (2,3-dihydroxy-3-methylvalerate) into 2-oxo-3-methylpentanoate (2-oxo-3-methylvalerate) and of (2R)-2,3-dihydroxy-3-methylbutanoate (2,3-dihydroxyisovalerate) into 2-oxo-3-methylbutanoate (2-oxoisovalerate), the penultimate precursor to L-isoleucine and L-valine, respectively. In Nostoc sp. (strain PCC 7120 / SAG 25.82 / UTEX 2576), this protein is Dihydroxy-acid dehydratase.